A 554-amino-acid polypeptide reads, in one-letter code: Glucose-6-phosphate isomerase (554 aa).

The Proton donor role is filled by glutamate 359. Active-site residues include histidine 390 and lysine 518.

Belongs to the GPI family.

The protein resides in the cytoplasm. It catalyses the reaction alpha-D-glucose 6-phosphate = beta-D-fructose 6-phosphate. It participates in carbohydrate biosynthesis; gluconeogenesis. It functions in the pathway carbohydrate degradation; glycolysis; D-glyceraldehyde 3-phosphate and glycerone phosphate from D-glucose: step 2/4. Its function is as follows. Catalyzes the reversible isomerization of glucose-6-phosphate to fructose-6-phosphate. The protein is Glucose-6-phosphate isomerase of Stutzerimonas stutzeri (strain A1501) (Pseudomonas stutzeri).